The sequence spans 356 residues: tRNA N6-adenosine threonylcarbamoyltransferase (356 aa).

Fe cation contacts are provided by H115 and H119. Substrate-binding positions include 138 to 142 (LVSGG), D171, G184, and N283. D311 contacts Fe cation.

It belongs to the KAE1 / TsaD family. Requires Fe(2+) as cofactor.

It localises to the cytoplasm. It carries out the reaction L-threonylcarbamoyladenylate + adenosine(37) in tRNA = N(6)-L-threonylcarbamoyladenosine(37) in tRNA + AMP + H(+). In terms of biological role, required for the formation of a threonylcarbamoyl group on adenosine at position 37 (t(6)A37) in tRNAs that read codons beginning with adenine. Is involved in the transfer of the threonylcarbamoyl moiety of threonylcarbamoyl-AMP (TC-AMP) to the N6 group of A37, together with TsaE and TsaB. TsaD likely plays a direct catalytic role in this reaction. The protein is tRNA N6-adenosine threonylcarbamoyltransferase of Prochlorococcus marinus (strain MIT 9313).